The chain runs to 157 residues: Small ribosomal subunit protein uS7 (157 aa).

This sequence belongs to the universal ribosomal protein uS7 family. Part of the 30S ribosomal subunit. Contacts proteins S9 and S11.

One of the primary rRNA binding proteins, it binds directly to 16S rRNA where it nucleates assembly of the head domain of the 30S subunit. Is located at the subunit interface close to the decoding center, probably blocks exit of the E-site tRNA. This is Small ribosomal subunit protein uS7 from Chloroflexus aggregans (strain MD-66 / DSM 9485).